The chain runs to 954 residues: cGMP-specific 3',5'-cyclic phosphodiesterase alpha (954 aa).

The Cytoplasmic segment spans residues 1–259 (MMDTKVDQTI…NTFYSSFPFK (259 aa)). The helical transmembrane segment at 260 to 280 (LFLHSLYMIFICFIYFVVLYF) threads the bilayer. At 281–296 (MLLKKIYTHPFIFHLS) the chain is on the extracellular side. The helical transmembrane segment at 297 to 317 (VLKFLFDIIFFLSFILYPLFL) threads the bilayer. The Cytoplasmic segment spans residues 318-327 (RLKRIDKIIY). A helical transmembrane segment spans residues 328–348 (SSYISSYIFVCVTFLYSFIIF). Residues 349–365 (KCSSYSVKMNSNTYQNN) lie on the Extracellular side of the membrane. Residues 366–386 (FVFQNMLFLLINIIYICIFCF) traverse the membrane as a helical segment. Residues 387 to 401 (LKNYMILYSFLYNCR) are Cytoplasmic-facing. Residues 402–422 (FSIFCILFIFLYYYLFFSLDF) traverse the membrane as a helical segment. At 423–432 (YRIIHLPLDN) the chain is on the extracellular side. A helical transmembrane segment spans residues 433–453 (FFFPFLCFLFFSFLFIFKIIM). Topologically, residues 454-954 (SLYYEYVYEK…LSKLELIKFE (501 aa)) are cytoplasmic. The PDEase domain occupies 586 to 930 (NQEETKSFLS…ERWESHKNDN (345 aa)). His680 acts as the Proton donor in catalysis. 680-684 (HTSLH) contacts 3',5'-cyclic GMP. Zn(2+) is bound by residues His684, His720, Asp721, and Asp832. 3',5'-cyclic GMP contacts are provided by Asp721, Asp832, and Gln884. Asp721 contributes to the Mg(2+) binding site.

This sequence belongs to the cyclic nucleotide phosphodiesterase family. Requires Zn(2+) as cofactor. Mg(2+) serves as cofactor.

The protein localises to the membrane. It carries out the reaction 3',5'-cyclic GMP + H2O = GMP + H(+). Its pathway is purine metabolism; 3',5'-cyclic GMP degradation; GMP from 3',5'-cyclic GMP: step 1/1. Not inhibited by cAMP. Inhibited by zaprinast. Functionally, specifically hydrolyzes the second messenger cGMP, which is a key regulator of many important physiological processes. The protein is cGMP-specific 3',5'-cyclic phosphodiesterase alpha of Plasmodium falciparum (isolate 3D7).